A 790-amino-acid polypeptide reads, in one-letter code: Aryl hydrocarbon receptor nuclear translocator (790 aa).

The segment covering 1–25 has biased composition (polar residues); the sequence is MAATTANPEMTSDVPSLGPNITSGN. Residues 1–98 are disordered; it reads MAATTANPEM…LARENHSEIE (98 aa). Alanine 2 carries the post-translational modification N-acetylalanine. A Glycyl lysine isopeptide (Lys-Gly) (interchain with G-Cter in SUMO2) cross-link involves residue lysine 58. Basic and acidic residues predominate over residues 60 to 98; sequence LRCDEDQMSNDKERFARSDDEQSSADKERLARENHSEIE. Serine 77 is subject to Phosphoserine. The DNA-binding stretch occupies residues 88–128; that stretch reads RLARENHSEIERRRRNKMTAYITELSDIVPTCSALARKPDK. The bHLH domain occupies 89–142; it reads LARENHSEIERRRRNKMTAYITELSDIVPTCSALARKPDKLTILRMAVSHMKSL. The tract at residues 112-168 is required for heterodimer formation with HIF1A; the sequence is LSDIVPTCSALARKPDKLTILRMAVSHMKSLRGTGNTSTDGSYKPSFLTDQELKHLI. The segment at 112 to 264 is required for heterodimer formation with EPAS1; the sequence is LSDIVPTCSA…MCMGSRRSFI (153 aa). PAS domains lie at 161–235 and 349–419; these read DQEL…LTGR and PNCT…VKLK. The interval 167–171 is mediates the transcription activity and dimerization of the AHR:ARNT complex; the sequence is LILEA. The PAC domain maps to 424–467; sequence SVMFRFRSKNREWLWTRTSSFTFQNPYSDEIEYIICTNTNVKNS. Polar residues-rich tracts occupy residues 465–480 and 629–672; these read KNSS…NPIQ and HSNP…GNFQ. Disordered regions lie at residues 465-494, 629-695, and 729-790; these read KNSS…PLEV, HSNP…AAAY, and QWQG…SFSE. Over residues 673 to 695 the composition is skewed to low complexity; the sequence is SPSSFSSMSLSSTSTASSGAAAY. A compositionally biased stretch (polar residues) spans 741 to 758; that stretch reads SSEQHVQQPSTQQPNQPE.

Monomer. Homodimer only upon binding to a DNA. Efficient DNA binding requires dimerization with another bHLH protein. Interacts with TACC3. Interacts with HIF1A, EPAS1, NPAS1 and NPAS3; forms a heterodimer that binds core DNA sequence 5'-TACGTG-3' within the hypoxia response element (HRE) of target gene promoters. Forms a heterodimer with AHRR, as well as with other bHLH proteins. Interacts with NOCA7. Interacts with TACC3. Interacts with AHR; the heterodimer ARNT:AHR binds to core DNA sequence 5'-TGCGTG-3' within the dioxin response element (DRE) of target gene promoters and activates their transcription. Interacts with SIM1 and NPAS4. As to expression, was expressed at almost the same level in all tissues except for the heart, liver, and small intestine.

It localises to the nucleus. Required for activity of the AHR. Upon ligand binding, AHR translocates into the nucleus, where it heterodimerizes with ARNT and induces transcription by binding to xenobiotic response elements (XRE). Not required for the ligand-binding subunit to translocate from the cytosol to the nucleus after ligand binding. The complex initiates transcription of genes involved in the regulation of a variety of biological processes, including angiogenesis, hematopoiesis, drug and lipid metabolism, cell motility and immune modulation. The heterodimer binds to core DNA sequence 5'-TACGTG-3' within the hypoxia response element (HRE) of target gene promoters and functions as a transcriptional regulator of the adaptive response to hypoxia. The heterodimer ARNT:AHR binds to core DNA sequence 5'-TGCGTG-3' within the dioxin response element (DRE) of target gene promoters and activates their transcription. The sequence is that of Aryl hydrocarbon receptor nuclear translocator (ARNT) from Oryctolagus cuniculus (Rabbit).